A 517-amino-acid chain; its full sequence is Protein translocase subunit SecD (517 aa).

Transmembrane regions (helical) follow at residues 5–25, 357–377, 380–400, 407–427, 455–475, and 479–499; these read LRWI…FPLD, IWAG…YYKF, FIAS…MGMF, PGIA…VLIF, IIDS…FGTG, and GFAV…VTLS.

This sequence belongs to the SecD/SecF family. SecD subfamily. In terms of assembly, forms a complex with SecF. Part of the essential Sec protein translocation apparatus which comprises SecA, SecYEG and auxiliary proteins SecDF. Other proteins may also be involved.

The protein resides in the cell inner membrane. In terms of biological role, part of the Sec protein translocase complex. Interacts with the SecYEG preprotein conducting channel. SecDF uses the proton motive force (PMF) to complete protein translocation after the ATP-dependent function of SecA. This chain is Protein translocase subunit SecD, found in Calditerrivibrio nitroreducens (strain DSM 19672 / NBRC 101217 / Yu37-1).